A 205-amino-acid polypeptide reads, in one-letter code: Regulator of G-protein signaling 4 (205 aa).

S-palmitoyl cysteine attachment occurs at residues Cys-2, Cys-12, and Cys-95. The region spanning 62–178 (SLENLISHEC…LKSRFYLDLV (117 aa)) is the RGS domain.

In terms of processing, palmitoylated on Cys-2 and/or Cys-12. Post-translationally, phosphorylated by cyclic GMP-dependent protein kinase.

In terms of biological role, inhibits signal transduction by increasing the GTPase activity of G protein alpha subunits thereby driving them into their inactive GDP-bound form. Activity on G(z)-alpha is inhibited by phosphorylation of the G-protein. Activity on G(z)-alpha and G(i)-alpha-1 is inhibited by palmitoylation of the G-protein. The chain is Regulator of G-protein signaling 4 (RGS4) from Pongo abelii (Sumatran orangutan).